A 373-amino-acid polypeptide reads, in one-letter code: 3-dehydroquinate synthase (373 aa).

Residues 120–124, 144–145, K157, K166, and 184–187 contribute to the NAD(+) site; these read GVVGD, TT, and FLKT. Zn(2+) contacts are provided by E199, H262, and H278.

Belongs to the sugar phosphate cyclases superfamily. Dehydroquinate synthase family. NAD(+) is required as a cofactor. Requires Co(2+) as cofactor. The cofactor is Zn(2+).

It is found in the cytoplasm. It carries out the reaction 7-phospho-2-dehydro-3-deoxy-D-arabino-heptonate = 3-dehydroquinate + phosphate. It participates in metabolic intermediate biosynthesis; chorismate biosynthesis; chorismate from D-erythrose 4-phosphate and phosphoenolpyruvate: step 2/7. Catalyzes the conversion of 3-deoxy-D-arabino-heptulosonate 7-phosphate (DAHP) to dehydroquinate (DHQ). This is 3-dehydroquinate synthase from Clostridium tetani (strain Massachusetts / E88).